The sequence spans 466 residues: MDVPRPAFKCFDDDGRLKRSGTVWTASAHIITAVIGSGVLSLAWAIGQLGWIAGPTVMLLFSFVTYYSSTLLSDCYRTGDPVSGKRNYTYMDAVRSILGGFRFKICGLIQYLNLFGITVGYTIAASISMMAIKRSNCFHESGGKNPCHMSSNPYMIMFGVTEILLSQIKDFDQIWWLSIVAAIMSFTYSAIGLALGIIQVAANGVVKGSLTGISIGAVTQTQKIWRTFQALGDIAFAYSYSVVLIEIQDTVRSPPAESKTMKIATRISIAVTTTFYMLCGCMGYAAFGDKAPGNLLTGFGFYNPFWLLDVANAAIVIHLVGAYQVFAQPIFAFIEKQAAARFPDSDLVTKEYEIRIPGFRSPYKVNVFRAVYRSGFVVLTTVISMLMPFFNDVVGILGALGFWPLTVYFPVEMYIRQRKVERWSMKWVCLQMLSCGCLMITLVAGVGSIAGVMLDLKVYKPFKTTY.

Residues 1–22 (MDVPRPAFKCFDDDGRLKRSGT) lie on the Cytoplasmic side of the membrane. The next 2 membrane-spanning stretches (helical) occupy residues 23 to 43 (VWTASAHIITAVIGSGVLSLA) and 44 to 64 (WAIGQLGWIAGPTVMLLFSFV). The Cytoplasmic segment spans residues 65–111 (TYYSSTLLSDCYRTGDPVSGKRNYTYMDAVRSILGGFRFKICGLIQY). Residues 112-132 (LNLFGITVGYTIAASISMMAI) traverse the membrane as a helical segment. Residues 133–177 (KRSNCFHESGGKNPCHMSSNPYMIMFGVTEILLSQIKDFDQIWWL) are Extracellular-facing. Residues 178–198 (SIVAAIMSFTYSAIGLALGII) traverse the membrane as a helical segment. Residues 199–226 (QVAANGVVKGSLTGISIGAVTQTQKIWR) are Cytoplasmic-facing. The chain crosses the membrane as a helical span at residues 227-247 (TFQALGDIAFAYSYSVVLIEI). Residues 248 to 266 (QDTVRSPPAESKTMKIATR) are Extracellular-facing. The helical transmembrane segment at 267 to 287 (ISIAVTTTFYMLCGCMGYAAF) threads the bilayer. The Cytoplasmic portion of the chain corresponds to 288 to 290 (GDK). A helical transmembrane segment spans residues 291 to 311 (APGNLLTGFGFYNPFWLLDVA). Over 312–313 (NA) the chain is Extracellular. The chain crosses the membrane as a helical span at residues 314–334 (AIVIHLVGAYQVFAQPIFAFI). Residues 335–369 (EKQAAARFPDSDLVTKEYEIRIPGFRSPYKVNVFR) are Cytoplasmic-facing. Residues 370-390 (AVYRSGFVVLTTVISMLMPFF) traverse the membrane as a helical segment. Residues 391–392 (ND) are Extracellular-facing. A helical transmembrane segment spans residues 393 to 413 (VVGILGALGFWPLTVYFPVEM). Residues 414–435 (YIRQRKVERWSMKWVCLQMLSC) are Cytoplasmic-facing. A helical transmembrane segment spans residues 436-456 (GCLMITLVAGVGSIAGVMLDL). Residues 457 to 466 (KVYKPFKTTY) are Extracellular-facing.

It belongs to the amino acid/polyamine transporter 2 family. Amino acid/auxin permease (AAAP) (TC 2.A.18.2) subfamily. In terms of tissue distribution, expressed in leaves, stems and flowers.

The protein resides in the cell membrane. Inhibited by 2,4-dinitrophenol. Functionally, amino acid-proton symporter. Stereospecific transporter with a broad specificity for neutral amino acids, favoring small amino acids such as alanine, asparagine and glutamine. Also accepts large aromatic residues such as in phenlalanine or tyrosine. The protein is Amino acid permease 4 (AAP4) of Arabidopsis thaliana (Mouse-ear cress).